Here is a 637-residue protein sequence, read N- to C-terminus: Transcription factor PHYTOCHROME INTERACTING FACTOR-LIKE 15 (637 aa).

Positions 35–46 (FFGGTGGGGGGS) are enriched in gly residues. 3 disordered regions span residues 35 to 54 (FFGG…QERQ), 146 to 213 (ASLP…EGVM), and 356 to 397 (ECSA…RRRR). The span at 149-170 (PASNHNGATNNRNAPVATTTTR) shows a compositional bias: polar residues. The interval 384–397 (RTAEVHNLSERRRR) is basic motif. Basic and acidic residues predominate over residues 384 to 397 (RTAEVHNLSERRRR). The region spanning 384-433 (RTAEVHNLSERRRRDRINEKMRALQELIPNCNKIDKASMLDEAIEYLKTL) is the bHLH domain. Residues 398 to 433 (DRINEKMRALQELIPNCNKIDKASMLDEAIEYLKTL) form a helix-loop-helix motif region. Positions 601 to 637 (GDNENFRIPSSAQTKSSQFSDGTGKGTNARERDGAET) are disordered. Positions 608–621 (IPSSAQTKSSQFSD) are enriched in polar residues. Positions 628–637 (NARERDGAET) are enriched in basic and acidic residues.

This sequence belongs to the bHLH protein family. Interacts with LF and PRR1.

The protein localises to the nucleus. Functionally, transcription factor that may act as negative regulator of phyB-dependent light signal transduction. The chain is Transcription factor PHYTOCHROME INTERACTING FACTOR-LIKE 15 from Oryza sativa subsp. japonica (Rice).